An 858-amino-acid polypeptide reads, in one-letter code: Ubiquitin carboxyl-terminal hydrolase 13 (858 aa).

S112 carries the phosphoserine modification. The UBP-type; degenerate zinc finger occupies 185-293 (PVSKYANNLV…KHLAHFGIDM (109 aa)). Zn(2+) is bound by residues C209, C212, C229, and H242. A Glycyl lysine isopeptide (Lys-Gly) (interchain with G-Cter in SUMO2) cross-link involves residue K309. The 523-residue stretch at 334-856 (TGLKNLGNSC…LGYMYFYRRI (523 aa)) folds into the USP domain. The active-site Nucleophile is the C343. Residue K403 forms a Glycyl lysine isopeptide (Lys-Gly) (interchain with G-Cter in SUMO2) linkage. 2 UBA domains span residues 650-691 (DIDE…IIVH) and 722-762 (QPPE…IFSH). The Proton acceptor role is filled by H818.

It belongs to the peptidase C19 family. As to quaternary structure, interacts with UFD1. Interacts (via UBA domains) with SIAH2 (when ubiquitinated). Interacts with BAG6; the interaction is direct and may mediate UBL4A deubiquitination. Interacts (via UBA 2 domain) with AMFR; the interaction is direct. Interacts with UBL4A; may be indirect via BAG6. Interacts with NEDD4.

The protein localises to the cytoplasm. The enzyme catalyses Thiol-dependent hydrolysis of ester, thioester, amide, peptide and isopeptide bonds formed by the C-terminal Gly of ubiquitin (a 76-residue protein attached to proteins as an intracellular targeting signal).. Its activity is regulated as follows. Specifically inhibited by spautin-1 (specific and potent autophagy inhibitor-1), a derivative of MBCQ that binds to USP13 and inhibits deubiquitinase activity. Regulated by PIK3C3/VPS34-containing complexes. The weak deubiquitinase activity in vitro suggests the existence of some mechanism that activates the enzyme. Deubiquitinase that mediates deubiquitination of target proteins such as BECN1, MITF, SKP2 and USP10 and is involved in various processes such as autophagy, endoplasmic reticulum-associated degradation (ERAD), cell cycle progression or DNA damage response. Component of a regulatory loop that controls autophagy and p53/TP53 levels: mediates deubiquitination of BECN1, a key regulator of autophagy, leading to stabilize the PIK3C3/VPS34-containing complexes. Alternatively, forms with NEDD4 a deubiquitination complex, which subsequently stabilizes VPS34 to promote autophagy. Also deubiquitinates USP10, an essential regulator of p53/TP53 stability. In turn, PIK3C3/VPS34-containing complexes regulate USP13 stability, suggesting the existence of a regulatory system by which PIK3C3/VPS34-containing complexes regulate p53/TP53 protein levels via USP10 and USP13. Recruited by nuclear UFD1 and mediates deubiquitination of SKP2, thereby regulating endoplasmic reticulum-associated degradation (ERAD). Also regulates ERAD through the deubiquitination of UBL4A a component of the BAG6/BAT3 complex. Mediates stabilization of SIAH2 independently of deubiquitinase activity: binds ubiquitinated SIAH2 and acts by impairing SIAH2 autoubiquitination. Regulates the cell cycle progression by stabilizing cell cycle proteins such as SKP2 and AURKB. In addition, plays an important role in maintaining genomic stability and in DNA replication checkpoint activation via regulation of RAP80 and TOPBP1. Deubiquitinates the multifunctional protein HMGB1 and subsequently drives its nucleocytoplasmic localization and its secretion. Positively regulates type I and type II interferon signalings by deubiquitinating STAT1 but negatively regulates antiviral response by deubiquitinating STING1. The polypeptide is Ubiquitin carboxyl-terminal hydrolase 13 (Usp13) (Mus musculus (Mouse)).